The primary structure comprises 621 residues: MAEKLPTEFDVVIIGTGLPESILAAACSRSGQRVLHVDSRSYYGGNWASFSFTGLQSWLKDYQQNHDSEEGVTATWQDLIHETEEAISLRKKDETIQHTEVFCYASQDVEDSVQDTETLQRSSPLEASATPADSLDSASLPKERQSAYSTSYEVPSRHTEESDRELSLPSANVEDSLEKEKYCGDKTDMHTVSGEDKGEHKLVVQDSIEQPKRNRITYSQMVKESRRFNIDLVSKPLYSQGSLIDLLIKSNVSRYAEFKNVTRILAFWEGKVEQVPCSRADVFNSKELSMVEKRMLMKFLTFCLDYEQHSDEYQDFKQCSFSDYLKTKKLTPNLQHFILHSIAMTSESSCTTLDGLQATKNFLQCLGRFGNTPFIFPLYGHGEIPQCFCRMCAVFGGVYCLRHKVQCLVVDKDSGRCKGIIDAFGQRISANYFIVEDSYLPKETCSNVQYKQISRAVLITDQSILKTDSDQQISILVVPPLEPGTTSVRVMELCSSTMTCMKDSYLVHLTCSSSKTAREDLEPVVKQLFIPEAEAEAGKDELRKPRLLWALYFNMRDSSGVSRSSYCGLPSNVYICSGPDWGLGSEHAVKQAETLFQEIFPSEEFCPPPPNPEDIIFEAEG.

Positions 113-171 are disordered; it reads VQDTETLQRSSPLEASATPADSLDSASLPKERQSAYSTSYEVPSRHTEESDRELSLPSA. Over residues 115–125 the composition is skewed to polar residues; the sequence is DTETLQRSSPL. Over residues 155–166 the composition is skewed to basic and acidic residues; sequence PSRHTEESDREL.

It belongs to the Rab GDI family. As to quaternary structure, monomer. Heterotrimer composed of RABGGTA, RABGGTB and CHML; within this trimer, RABGGTA and RABGGTB form the catalytic component B, while CHML (component A) mediates Rab protein binding. Interacts with RAB1A, RAB7A and RAB27A, but has much lower affinity for RAB1A, RAB7A and RAB27A than CHM. Interacts with the non-phosphorylated forms of RAB3A, RAB3B, RAB3C, RAB3D, RAB5B, RAB5C, RAB8A, RAB8B, RAB10, RAB12, RAB35, and RAB43.

The protein resides in the cytoplasm. The protein localises to the cytosol. In terms of biological role, substrate-binding subunit (component A) of the Rab geranylgeranyltransferase (GGTase) complex. Binds unprenylated Rab proteins and presents the substrate peptide to the catalytic component B. The component A is thought to be regenerated by transferring its prenylated Rab back to the donor membrane. Less effective than CHM in supporting prenylation of Rab3 family. In Mus musculus (Mouse), this protein is Rab proteins geranylgeranyltransferase component A 2 (Chml).